The following is a 739-amino-acid chain: TonB-dependent heme receptor A (739 aa).

An N-terminal signal peptide occupies residues 1–22 (MKMKKQCATLTFFIGLHGYTIA). The region spanning 38-150 (GHHERQPDRS…FAGTIKLETK (113 aa)) is the TBDR plug domain. The TBDR beta-barrel domain maps to 161–739 (LLGGLLKYGY…NIKLSISKQF (579 aa)).

This sequence belongs to the TonB-dependent receptor family.

It localises to the cell outer membrane. In terms of biological role, heme receptor. In Haemophilus ducreyi (strain 35000HP / ATCC 700724), this protein is TonB-dependent heme receptor A (tdhA).